The sequence spans 864 residues: 3-O-alpha-D-mannopyranosyl-alpha-D-mannopyranose xylosylphosphotransferase (864 aa).

A disordered region spans residues 1–66 (MPSTALSPPS…VPPRSPSRKI (66 aa)). Residues 1-82 (MPSTALSPPS…HIRPHITPRT (82 aa)) are Cytoplasmic-facing. 2 stretches are compositionally biased toward low complexity: residues 16 to 29 (SYDS…PSSP) and 42 to 52 (SPSPSRLESLL). The chain crosses the membrane as a helical span at residues 83-103 (LTPVFLWTLALWLIHHFLFPL). Residues 104 to 864 (SSPFAKLAKP…WDPVKDRYND (761 aa)) are Lumenal-facing. N-linked (GlcNAc...) asparagine glycans are attached at residues Asn200, Asn301, and Asn583.

The protein belongs to the XPT1 family. It depends on Mn(2+) as a cofactor.

It is found in the golgi apparatus membrane. The catalysed reaction is 3-alpha-D-mannopyranosyl-alpha-D-mannopyranose + UDP-alpha-D-xylose = 3-O-(6-O-alpha-D-xylosylphospho-alpha-D-mannopyranosyl)-alpha-D-mannopyranose + UMP + H(+). Xylosylphosphotransferase that is specific for UDP-xylose as a donor and mannose as an acceptor to form a xylose-alpha-1-phosphate-6-mannose linkage. Functions in the O-glycosylation of proteins en route through the secretory pathway. This is 3-O-alpha-D-mannopyranosyl-alpha-D-mannopyranose xylosylphosphotransferase (XPT1) from Cryptococcus neoformans var. grubii (Filobasidiella neoformans var. grubii).